We begin with the raw amino-acid sequence, 138 residues long: Protein Rrf1 (138 aa).

The 113-residue stretch at 4 to 116 folds into the Response regulatory domain; sequence RILVVQEDPD…LLLALVDRAL (113 aa). A 4-aspartylphosphate mark is found at Asp-13 and Asp-53.

Its function is as follows. May be involved in regulation of gene transcription. Belongs to the family of response regulators, and members of this family involved in the regulation of gene transcription are two-domain proteins. This protein contains only the N-terminal phosphorylation domain and not the C-terminal DNA-binding domain but it may bind to Rrf2 protein and the latter may bind to DNA. This chain is Protein Rrf1 (rrf1), found in Nitratidesulfovibrio vulgaris (strain ATCC 29579 / DSM 644 / CCUG 34227 / NCIMB 8303 / VKM B-1760 / Hildenborough) (Desulfovibrio vulgaris).